The sequence spans 185 residues: Ribosome-recycling factor (185 aa).

This sequence belongs to the RRF family.

The protein resides in the cytoplasm. Functionally, responsible for the release of ribosomes from messenger RNA at the termination of protein biosynthesis. May increase the efficiency of translation by recycling ribosomes from one round of translation to another. The protein is Ribosome-recycling factor of Helicobacter hepaticus (strain ATCC 51449 / 3B1).